Consider the following 116-residue polypeptide: Large ribosomal subunit protein bL17 (116 aa).

This sequence belongs to the bacterial ribosomal protein bL17 family. In terms of assembly, part of the 50S ribosomal subunit. Contacts protein L32.

This is Large ribosomal subunit protein bL17 from Prochlorococcus marinus (strain NATL2A).